A 193-amino-acid polypeptide reads, in one-letter code: Ribonuclease HII (193 aa).

Positions 15–193 constitute an RNase H type-2 domain; sequence YIVAGIDEAG…PYHRKSFKCC (179 aa). The a divalent metal cation site is built by Asp21, Glu22, and Asp112.

The protein belongs to the RNase HII family. The cofactor is Mn(2+). Mg(2+) serves as cofactor.

The protein localises to the cytoplasm. It catalyses the reaction Endonucleolytic cleavage to 5'-phosphomonoester.. Endonuclease that specifically degrades the RNA of RNA-DNA hybrids. The protein is Ribonuclease HII of Rickettsia akari (strain Hartford).